The chain runs to 434 residues: Perilipin-3 (434 aa).

The tract at residues 1-22 (MSADGAEADGSTQVTVEEPVQQ) is disordered. The residue at position 2 (S2) is an N-acetylserine. S31 carries the post-translational modification Phosphoserine. An N6-acetyllysine modification is found at K65. At S91 the chain carries Phosphoserine. Residue K122 forms a Glycyl lysine isopeptide (Lys-Gly) (interchain with G-Cter in SUMO1) linkage. S130 and S148 each carry phosphoserine. At T170 the chain carries Phosphothreonine. S175 and S179 each carry phosphoserine. T216 is subject to Phosphothreonine. Residues S217 and S241 each carry the phosphoserine modification. Y251 is subject to Phosphotyrosine. Coiled-coil stretches lie at residues 252 to 277 (EHSL…QVLS) and 353 to 377 (TNVK…SSIH).

Belongs to the perilipin family. Homooligomer. Interacts with M6PR (via the cytoplasmic domain). Interacts with IGF2R (via the cytoplasmic domain). In terms of assembly, may exist as a homodimer. Post-translationally, phosphorylation at Tyr-251 by isoform 1 of CHKA (CHKalpha2) promotes dissociation from lipid droplets: dissociation is followed by recruitment of autophagosome machinery to lipid droplets and subsequent lipid droplet lipolysis.

The protein localises to the lipid droplet. It is found in the endosome membrane. The protein resides in the cytoplasm. Structural component of lipid droplets, which is required for the formation and maintenance of lipid storage droplets. Required for the transport of mannose 6-phosphate receptors (MPR) from endosomes to the trans-Golgi network. In Homo sapiens (Human), this protein is Perilipin-3 (PLIN3).